The following is a 161-amino-acid chain: Carboxysome assembly protein CcmN (161 aa).

A disordered region spans residues 111–140 (LLSAETPPTTATVSSSEPAGRSPQSSAIAH). A compositionally biased stretch (polar residues) spans 116–137 (TPPTTATVSSSEPAGRSPQSSA). Positions 144 to 161 (VYGKEQFLRMRQSMFPDR) match the Encapsulation peptide motif.

Belongs to the CcmN family. As to quaternary structure, interacts with CcmM via the N-terminus of CcmN. Interacts with CcmK2 via the 18 C-terminal residues.

The protein localises to the carboxysome. Its function is as follows. Required for carboxysome formation; the N-terminus interacts with CcmM which itself binds RuBisCO (ribulose bisphosphate carboxylase, rbcL-rbcS), while the C-terminal 18 residues interact with carboxysome shell protein CcmK2. Required for growth in normal air. Functionally, beta-carboxysome assembly initiates when soluble RuBisCO is condensed into a liquid matrix in a pre-carboxysome by the RbcS-like domains of probably both CcmM58 and CcmM35. CcmN interacts with the N-terminus of CcmM58, and then recruits the CcmK2 major shell protein via CcmN's encapsulation peptide. Shell formation requires CcmK proteins and CcmO. CcmL caps the otherwise elongated carboxysome. Once fully encapsulated carboxysomes are formed, they migrate within the cell probably via interactions with the cytoskeleton. This Synechococcus elongatus (strain ATCC 33912 / PCC 7942 / FACHB-805) (Anacystis nidulans R2) protein is Carboxysome assembly protein CcmN.